An 80-amino-acid polypeptide reads, in one-letter code: MPKKNEAPASFEKALSELEQIVTRLESGDLPLEEALNEFERGVQLARQGQAKLQQAEQRVQILLSDNEDTSLPPFTPDNE.

The protein belongs to the XseB family. In terms of assembly, heterooligomer composed of large and small subunits.

Its subcellular location is the cytoplasm. It catalyses the reaction Exonucleolytic cleavage in either 5'- to 3'- or 3'- to 5'-direction to yield nucleoside 5'-phosphates.. Bidirectionally degrades single-stranded DNA into large acid-insoluble oligonucleotides, which are then degraded further into small acid-soluble oligonucleotides. This Shigella sonnei (strain Ss046) protein is Exodeoxyribonuclease 7 small subunit.